We begin with the raw amino-acid sequence, 334 residues long: Phosphate acyltransferase (334 aa).

It belongs to the PlsX family. Homodimer. Probably interacts with PlsY.

Its subcellular location is the cytoplasm. It catalyses the reaction a fatty acyl-[ACP] + phosphate = an acyl phosphate + holo-[ACP]. It functions in the pathway lipid metabolism; phospholipid metabolism. In terms of biological role, catalyzes the reversible formation of acyl-phosphate (acyl-PO(4)) from acyl-[acyl-carrier-protein] (acyl-ACP). This enzyme utilizes acyl-ACP as fatty acyl donor, but not acyl-CoA. This Desulfitobacterium hafniense (strain DSM 10664 / DCB-2) protein is Phosphate acyltransferase.